The primary structure comprises 103 residues: Histone H4 (103 aa).

Gly residues predominate over residues 1–14 (MSGRGKGGKGLGKG). A disordered region spans residues 1-20 (MSGRGKGGKGLGKGGAKRHR). The residue at position 2 (Ser2) is an N-acetylserine. 2 positions are modified to N6-acetyl-N6-methyllysine; alternate: Lys6 and Lys13. Lys17 carries the N6-acetyllysine modification. A DNA-binding region spans residues 17–21 (KRHRK). An N6-methyllysine modification is found at Lys21.

This sequence belongs to the histone H4 family. The nucleosome is a histone octamer containing two molecules each of H2A, H2B, H3 and H4 assembled in one H3-H4 heterotetramer and two H2A-H2B heterodimers. The octamer wraps approximately 147 bp of DNA.

The protein resides in the nucleus. It is found in the chromosome. Functionally, core component of nucleosome. Nucleosomes wrap and compact DNA into chromatin, limiting DNA accessibility to the cellular machineries which require DNA as a template. Histones thereby play a central role in transcription regulation, DNA repair, DNA replication and chromosomal stability. DNA accessibility is regulated via a complex set of post-translational modifications of histones, also called histone code, and nucleosome remodeling. This is Histone H4 from Holothuria tubulosa (Tubular sea cucumber).